The sequence spans 202 residues: Holliday junction branch migration complex subunit RuvA (202 aa).

The domain I stretch occupies residues 1-65; that stretch reads MIAYVEGRLA…EDALELYGFA (65 aa). Positions 66–144 are domain II; that stretch reads TWDERQTFIV…VEDLPAAAPL (79 aa). Positions 145 to 155 are flexible linker; the sequence is VTGGAPGGVFR. The interval 155-202 is domain III; the sequence is RDALAGLANLGYGEEEASHVLKEVLHGEPDLDVGGALRAALRALARGR.

It belongs to the RuvA family. In terms of assembly, homotetramer. Forms an RuvA(8)-RuvB(12)-Holliday junction (HJ) complex. HJ DNA is sandwiched between 2 RuvA tetramers; dsDNA enters through RuvA and exits via RuvB. An RuvB hexamer assembles on each DNA strand where it exits the tetramer. Each RuvB hexamer is contacted by two RuvA subunits (via domain III) on 2 adjacent RuvB subunits; this complex drives branch migration. In the full resolvosome a probable DNA-RuvA(4)-RuvB(12)-RuvC(2) complex forms which resolves the HJ.

The protein resides in the cytoplasm. The RuvA-RuvB-RuvC complex processes Holliday junction (HJ) DNA during genetic recombination and DNA repair, while the RuvA-RuvB complex plays an important role in the rescue of blocked DNA replication forks via replication fork reversal (RFR). RuvA specifically binds to HJ cruciform DNA, conferring on it an open structure. The RuvB hexamer acts as an ATP-dependent pump, pulling dsDNA into and through the RuvAB complex. HJ branch migration allows RuvC to scan DNA until it finds its consensus sequence, where it cleaves and resolves the cruciform DNA. This is Holliday junction branch migration complex subunit RuvA from Nitratidesulfovibrio vulgaris (strain DP4) (Desulfovibrio vulgaris).